We begin with the raw amino-acid sequence, 580 residues long: Tricyclene synthase TPS4, chloroplastic (580 aa).

Residues 1-41 constitute a chloroplast transit peptide; the sequence is MLLNSSFISLPSFFKSQELGRTNLLIHRNGSPLLCYATNTN. (2E)-geranyl diphosphate-binding residues include arginine 296, aspartate 334, aspartate 338, arginine 475, and asparagine 478. Residues aspartate 334 and aspartate 338 each coordinate Mg(2+). Residues 334-338 carry the DDXXD motif motif; the sequence is DDIYD. 3 residues coordinate Mg(2+): asparagine 478, threonine 482, and glutamate 486.

This sequence belongs to the terpene synthase family. Tpsb subfamily. Mg(2+) is required as a cofactor. The cofactor is Mn(2+). In terms of tissue distribution, expressed in leaves.

It is found in the plastid. It localises to the chloroplast stroma. The catalysed reaction is (2E)-geranyl diphosphate = tricyclene + diphosphate. It carries out the reaction (2E)-geranyl diphosphate = (E)-beta-ocimene + diphosphate. It functions in the pathway secondary metabolite biosynthesis; terpenoid biosynthesis. Promotes the emission of terpenes volatile organic compounds (VOC) in response to damage mediated by arthropod herbivores (e.g. Spodoptera exigua), probably to attract natural enemies of the herbivores. This Medicago truncatula (Barrel medic) protein is Tricyclene synthase TPS4, chloroplastic (TPS4).